Consider the following 117-residue polypeptide: Hemerythrin subunit beta (117 aa).

Fe cation is bound by residues histidine 24, histidine 53, glutamate 57, histidine 72, histidine 76, histidine 105, and aspartate 110.

This sequence belongs to the hemerythrin family. In terms of assembly, octamer composed of two types of chains: alpha and beta.

Hemerythrin is a respiratory protein in blood cells of certain marine worms. The oxygen-binding site in each chain contains two iron atoms. This chain is Hemerythrin subunit beta, found in Lingula reevii (Inarticulated brachiopod).